The primary structure comprises 634 residues: Chaperone protein HtpG (634 aa).

An a; substrate-binding region spans residues 1–342; sequence MTVETDKQTL…SSDLSLNVSR (342 aa). Residues 343 to 559 form a b region; that stretch reads EILQSGPVVD…QGDLGLQMRQ (217 aa). Residues 560–634 are c; sequence LLEASGQAVP…LNKLLLELSA (75 aa).

It belongs to the heat shock protein 90 family. As to quaternary structure, homodimer.

It localises to the cytoplasm. Its function is as follows. Molecular chaperone. Has ATPase activity. This is Chaperone protein HtpG from Xanthomonas axonopodis pv. citri (strain 306).